We begin with the raw amino-acid sequence, 697 residues long: Potassium-transporting ATPase ATP-binding subunit (697 aa).

A run of 4 helical transmembrane segments spans residues proline 55–serine 75, glycine 82–alanine 102, leucine 245–phenylalanine 265, and valine 271–isoleucine 291. Residue aspartate 324 is the 4-aspartylphosphate intermediate of the active site. ATP-binding positions include aspartate 361, glutamate 365, phenylalanine 393 to serine 400, and lysine 412. Aspartate 535 and aspartate 539 together coordinate Mg(2+). 3 helical membrane-spanning segments follow: residues phenylalanine 605–methionine 625, alanine 633–methionine 653, and glycine 677–isoleucine 697.

Belongs to the cation transport ATPase (P-type) (TC 3.A.3) family. Type IA subfamily. As to quaternary structure, the system is composed of three essential subunits: KdpA, KdpB and KdpC.

The protein localises to the cell membrane. The enzyme catalyses K(+)(out) + ATP + H2O = K(+)(in) + ADP + phosphate + H(+). In terms of biological role, part of the high-affinity ATP-driven potassium transport (or Kdp) system, which catalyzes the hydrolysis of ATP coupled with the electrogenic transport of potassium into the cytoplasm. This subunit is responsible for energy coupling to the transport system and for the release of the potassium ions to the cytoplasm. In Bacillus mycoides (strain KBAB4) (Bacillus weihenstephanensis), this protein is Potassium-transporting ATPase ATP-binding subunit.